Here is a 74-residue protein sequence, read N- to C-terminus: MKSQMIAAVLLIAFCLCVVVTARMELQDVEDMENGFQKRRTCKDLIPVSECTDIRCRTSMKYRLNLCRKTCGSC.

Residues 1–22 form the signal peptide; sequence MKSQMIAAVLLIAFCLCVVVTA. Residues 23-39 constitute a propeptide that is removed on maturation; it reads RMELQDVEDMENGFQKR. The ShKT domain occupies 42–74; it reads CKDLIPVSECTDIRCRTSMKYRLNLCRKTCGSC. Disulfide bonds link C42-C74, C51-C67, and C56-C71.

The protein belongs to the sea anemone type 1 potassium channel toxin family. Type 1a subfamily.

The protein localises to the secreted. The protein resides in the nematocyst. In terms of biological role, potently blocks the voltage-gated potassium channel Kv1.1/KCNA1 (Ki=75 pM), KcsA (Ki~1 nM) and moderately blocks Kv1.2/KCNA2 (Ki=2.5 nM) and Kv1.3/KCNA3 (Ki=3.1 nM). Also facilitates acetylcholine release at the avian neuromuscular junction. Blockade and dissociation rate are sensitive to voltage. The chain is Kappa-stichotoxin-Hmg1a from Heteractis magnifica (Magnificent sea anemone).